Reading from the N-terminus, the 99-residue chain is Putative gene 45 protein (99 aa).

In Bacillus phage SP01 (Bacteriophage SP01), this protein is Putative gene 45 protein (45).